The following is a 1375-amino-acid chain: Probable GMP synthase [glutamine-hydrolyzing] (1375 aa).

A Glutamine amidotransferase type-1; first part domain is found at 7–119; that stretch reads QILVLDFGSQ…VLEIMESSQD (113 aa). The Nucleophile role is filled by cysteine 84. Residues 120-500 form an insert-1 region; it reads SKDSSCFAFQ…NNATQGFKSC (381 aa). N-acetyltransferase domains lie at 141-300 and 318-484; these read LSFD…KALE and VFLR…LEKK. In terms of domain architecture, Glutamine amidotransferase type-1; second part spans 501-580; sequence SLFKGIKQDS…AVGICGANTC (80 aa). Active-site residues include histidine 554 and glutamate 556. An insert-2 region spans residues 597–1071; sequence IVYGGKAHCE…SGVANSLKIT (475 aa). In terms of domain architecture, N-acetyltransferase 3 spans 612–765; the sequence is MQIQEAFKHI…ELIPLSIARE (154 aa). Positions 1011–1036 are disordered; it reads RIVDSQHTESSDIKGQSHLESSADSG. The span at 1014–1027 shows a compositional bias: basic and acidic residues; sequence DSQHTESSDIKGQS. The 196-residue stretch at 1055 to 1250 folds into the GMPS ATP-PPase domain; that stretch reads YLEGNDRSGV…LGMPESMLMR (196 aa). 1083–1089 is an ATP binding site; sequence SGGVDSS.

In terms of assembly, homodimer.

It catalyses the reaction XMP + L-glutamine + ATP + H2O = GMP + L-glutamate + AMP + diphosphate + 2 H(+). Its pathway is purine metabolism; GMP biosynthesis; GMP from XMP (L-Gln route): step 1/1. Its function is as follows. Catalyzes the synthesis of GMP from XMP. The sequence is that of Probable GMP synthase [glutamine-hydrolyzing] (guaA) from Helicobacter hepaticus (strain ATCC 51449 / 3B1).